Here is a 122-residue protein sequence, read N- to C-terminus: Large ribosomal subunit protein uL14c (122 aa).

This sequence belongs to the universal ribosomal protein uL14 family. In terms of assembly, part of the 50S ribosomal subunit.

It is found in the plastid. The protein resides in the chloroplast. Binds to 23S rRNA. The sequence is that of Large ribosomal subunit protein uL14c from Tupiella akineta (Green alga).